Consider the following 285-residue polypeptide: MKLCGFDVGLDRRFFLIAGPCVVESEQLQMDVAGHLKEITAALGIHFIFKSSYDKANRSSGASFRGPGMDKGLEILAKVKKDLQVPILTDVHTESEIPAVSQVVDVLQTPAFLCRQTDFIRAVAQSGRPVNIKKGQFLAPHDMKNVIDKARAAAKEAGLPEDSFMACERGASFGYNNLVSDMRSLSIMRETGAPVVFDATHSVQLPGGNGTSSGGMREMVPVLSRAAVAVGVAGLFMETHPNPPCALSDGPNAVPLKHMKALLETLVALDDVTKKNGFLENDFGV.

The protein belongs to the KdsA family.

The protein localises to the cytoplasm. The enzyme catalyses D-arabinose 5-phosphate + phosphoenolpyruvate + H2O = 3-deoxy-alpha-D-manno-2-octulosonate-8-phosphate + phosphate. Its pathway is carbohydrate biosynthesis; 3-deoxy-D-manno-octulosonate biosynthesis; 3-deoxy-D-manno-octulosonate from D-ribulose 5-phosphate: step 2/3. It functions in the pathway bacterial outer membrane biogenesis; lipopolysaccharide biosynthesis. The sequence is that of 2-dehydro-3-deoxyphosphooctonate aldolase from Delftia acidovorans (strain DSM 14801 / SPH-1).